Here is a 475-residue protein sequence, read N- to C-terminus: Ribulose bisphosphate carboxylase large chain (475 aa).

Positions 1-2 (MS) are excised as a propeptide. At Pro-3 the chain carries N-acetylproline. Residue Lys-14 is modified to N6,N6,N6-trimethyllysine. The substrate site is built by Asn-123 and Thr-173. Residue Lys-175 is the Proton acceptor of the active site. Lys-177 lines the substrate pocket. Residues Lys-201, Asp-203, and Glu-204 each coordinate Mg(2+). Lys-201 carries the N6-carboxylysine modification. His-294 functions as the Proton acceptor in the catalytic mechanism. Substrate-binding residues include Arg-295, His-327, and Ser-379.

The protein belongs to the RuBisCO large chain family. Type I subfamily. Heterohexadecamer of 8 large chains and 8 small chains; disulfide-linked. The disulfide link is formed within the large subunit homodimers. It depends on Mg(2+) as a cofactor. In terms of processing, the disulfide bond which can form in the large chain dimeric partners within the hexadecamer appears to be associated with oxidative stress and protein turnover.

Its subcellular location is the plastid. It is found in the chloroplast. The enzyme catalyses 2 (2R)-3-phosphoglycerate + 2 H(+) = D-ribulose 1,5-bisphosphate + CO2 + H2O. It carries out the reaction D-ribulose 1,5-bisphosphate + O2 = 2-phosphoglycolate + (2R)-3-phosphoglycerate + 2 H(+). RuBisCO catalyzes two reactions: the carboxylation of D-ribulose 1,5-bisphosphate, the primary event in carbon dioxide fixation, as well as the oxidative fragmentation of the pentose substrate in the photorespiration process. Both reactions occur simultaneously and in competition at the same active site. The polypeptide is Ribulose bisphosphate carboxylase large chain (Betula papyrifera (Paper birch)).